The following is a 523-amino-acid chain: Cryptochrome DASH (523 aa).

The 137-residue stretch at 6-142 (RVIICLLRND…KYQTFWGSTL (137 aa)) folds into the Photolyase/cryptochrome alpha/beta domain. Disordered regions lie at residues 174–211 (RPTFQMPDKLKPLPSGLEEGSVPSHEDFDQQDPLTDPR) and 486–523 (KPAGSWEKSARRGKGPSHTPKQHKNRGIDFYFSRNKDV). Residues 496-510 (RRGKGPSHTPKQHKN) show a composition bias toward basic residues.

This sequence belongs to the DNA photolyase class-1 family. FAD serves as cofactor. (6R)-5,10-methylene-5,6,7,8-tetrahydrofolate is required as a cofactor.

Its function is as follows. May have a photoreceptor function. Has weak cyclobutyl pyrimidine photolyase activity when expressed in E.coli and when tested in vitro. The protein is Cryptochrome DASH (cry-dash) of Xenopus laevis (African clawed frog).